A 476-amino-acid chain; its full sequence is Aspartyl/glutamyl-tRNA(Asn/Gln) amidotransferase subunit B (476 aa).

Belongs to the GatB/GatE family. GatB subfamily. In terms of assembly, heterotrimer of A, B and C subunits.

The enzyme catalyses L-glutamyl-tRNA(Gln) + L-glutamine + ATP + H2O = L-glutaminyl-tRNA(Gln) + L-glutamate + ADP + phosphate + H(+). The catalysed reaction is L-aspartyl-tRNA(Asn) + L-glutamine + ATP + H2O = L-asparaginyl-tRNA(Asn) + L-glutamate + ADP + phosphate + 2 H(+). Its function is as follows. Allows the formation of correctly charged Asn-tRNA(Asn) or Gln-tRNA(Gln) through the transamidation of misacylated Asp-tRNA(Asn) or Glu-tRNA(Gln) in organisms which lack either or both of asparaginyl-tRNA or glutaminyl-tRNA synthetases. The reaction takes place in the presence of glutamine and ATP through an activated phospho-Asp-tRNA(Asn) or phospho-Glu-tRNA(Gln). This is Aspartyl/glutamyl-tRNA(Asn/Gln) amidotransferase subunit B from Lactobacillus helveticus (strain DPC 4571).